We begin with the raw amino-acid sequence, 317 residues long: Porphobilinogen deaminase (317 aa).

Cys-245 is subject to S-(dipyrrolylmethanemethyl)cysteine.

The protein belongs to the HMBS family. As to quaternary structure, monomer. Dipyrromethane serves as cofactor.

The enzyme catalyses 4 porphobilinogen + H2O = hydroxymethylbilane + 4 NH4(+). It functions in the pathway porphyrin-containing compound metabolism; protoporphyrin-IX biosynthesis; coproporphyrinogen-III from 5-aminolevulinate: step 2/4. It participates in porphyrin-containing compound metabolism; chlorophyll biosynthesis. Functionally, tetrapolymerization of the monopyrrole PBG into the hydroxymethylbilane pre-uroporphyrinogen in several discrete steps. In Prochlorococcus marinus (strain MIT 9303), this protein is Porphobilinogen deaminase.